Consider the following 720-residue polypeptide: ABC transporter G family member STR2 (720 aa).

At 1–467 (MRHANGRRGD…NFINIRRTPE (467 aa)) the chain is on the cytoplasmic side. An ABC transporter domain is found at 25–274 (LEFSNLTYTV…LGRMGRKVPK (250 aa)). 70 to 77 (GPSGAGKS) is an ATP binding site. Residues 313–346 (GAHEMSIVPPSPAPSHREGRGHDRSNKRLHLKDQ) form a disordered region. Basic and acidic residues predominate over residues 327-346 (SHREGRGHDRSNKRLHLKDQ). The helical transmembrane segment at 468–488 (LFLSRLVVLTVMGIMMATMFM) threads the bilayer. Topologically, residues 489-502 (HPKKNLQGITNRLS) are extracellular. A helical membrane pass occupies residues 503-523 (FFIFTVCLFFFSSNDAVPAFI). The Cytoplasmic portion of the chain corresponds to 524–547 (QERFIFVRETSHNKYRASSYTIAG). A helical membrane pass occupies residues 548–568 (LITYLPFLAVQAAVYAVIVWF). Over 569–575 (ALSLRGP) the chain is Extracellular. The helical transmembrane segment at 576–596 (FIYFLIVLYMSLLSTNSFVVF) threads the bilayer. Residues 597-604 (VSSVVPNY) lie on the Cytoplasmic side of the membrane. The helical transmembrane segment at 605 to 625 (ILGYAAVIAFTALFFLFCGYF) threads the bilayer. Topologically, residues 626-693 (LNSHDMPQYW…QVESKKWEKV (68 aa)) are extracellular. N-linked (GlcNAc...) asparagine glycosylation is present at Asn-681. Residues 694 to 714 (YIMLAWAIVYRILFYIVLRFF) form a helical membrane-spanning segment. Residues 715-720 (SKNQRT) are Cytoplasmic-facing.

The protein belongs to the ABC transporter superfamily. ABCG family. Stunted arbuscule (STR) subfamily. In terms of assembly, heterodimerizes with STR; the resulting transporter is located in the peri-arbuscular membrane.

The protein localises to the cell membrane. Together with STR, required for arbuscule development in arbuscular mycorrhizal (AM) symbiosis. In Petunia hybrida (Petunia), this protein is ABC transporter G family member STR2.